The chain runs to 440 residues: Protein translocase subunit SecY (440 aa).

10 consecutive transmembrane segments (helical) span residues 17–37 (IFFT…PSPG), 74–94 (IFAI…LLTV), 116–135 (YTRY…IVAL), 155–175 (FFDL…VMWM), 178–198 (LITE…GIAT), 213–233 (GVVF…VVFV), 270–290 (VIPV…TQIV), 316–336 (WQYI…YVSV), 374–394 (LLFV…IMLD), and 403–423 (GATP…LTTV).

This sequence belongs to the SecY/SEC61-alpha family. In terms of assembly, component of the Sec protein translocase complex. Heterotrimer consisting of SecY, SecE and SecG subunits. The heterotrimers can form oligomers, although 1 heterotrimer is thought to be able to translocate proteins. Interacts with the ribosome. Interacts with SecDF, and other proteins may be involved. Interacts with SecA.

The protein resides in the cell membrane. Its function is as follows. The central subunit of the protein translocation channel SecYEG. Consists of two halves formed by TMs 1-5 and 6-10. These two domains form a lateral gate at the front which open onto the bilayer between TMs 2 and 7, and are clamped together by SecE at the back. The channel is closed by both a pore ring composed of hydrophobic SecY resides and a short helix (helix 2A) on the extracellular side of the membrane which forms a plug. The plug probably moves laterally to allow the channel to open. The ring and the pore may move independently. The sequence is that of Protein translocase subunit SecY from Corynebacterium glutamicum (strain ATCC 13032 / DSM 20300 / JCM 1318 / BCRC 11384 / CCUG 27702 / LMG 3730 / NBRC 12168 / NCIMB 10025 / NRRL B-2784 / 534).